The sequence spans 46 residues: Toxin PhcrTx2 (46 aa).

3 disulfides stabilise this stretch: Cys4/Cys40, Cys6/Cys32, and Cys22/Cys41.

It belongs to the sea anemone type 3 (BDS) potassium channel toxin family.

It localises to the secreted. The protein localises to the nematocyst. Its function is as follows. Neurotoxin that induces paralysis (but not death) to U.thayeri crabs. Partially and reversibly inhibits glutamate-evoked peak currents (IC(50)=4.7 uM) but not voltage-gated potassium channel currents in cultured isolated neurons from the land snail H.aspersa. Weakly inhibits voltage-gated potassium peak currents (IC(50)=6.4 uM) and steady-state currents (IC(50)=8.2 uM) in rat dorsal root ganglion (DRG) neurons. Weakly inhibits voltage-gated sodium currents in rat DRG neurons (IC(50)=0.9 uM). The polypeptide is Toxin PhcrTx2 (Phymanthus crucifer (Red beaded anemone)).